We begin with the raw amino-acid sequence, 193 residues long: CD70 antigen (193 aa).

The Cytoplasmic segment spans residues 1 to 17 (MPEEGSGCSVRRRPYGC). A helical; Signal-anchor for type II membrane protein membrane pass occupies residues 18 to 38 (VLRAALVPLVAGLVICLVVCI). Over 39 to 193 (QRFAQAQQQL…TFFGVQWVRP (155 aa)) the chain is Extracellular. The region spanning 56 to 191 (DVAELQLNHT…DETFFGVQWV (136 aa)) is the THD domain. Residue Asn63 is glycosylated (N-linked (GlcNAc...) asparagine). 2 disulfides stabilise this stretch: Cys115–Cys151 and Cys133–Cys168. Asn170 carries N-linked (GlcNAc...) asparagine glycosylation.

The protein belongs to the tumor necrosis factor family. Homotrimer. In terms of processing, N-glycosylated.

Its subcellular location is the cell membrane. Functionally, expressed at the plasma membrane of B cells, it is the ligand of the CD27 receptor which is specifically expressed at the surface of T cells. The CD70-CD27 signaling pathway mediates antigen-specific T cell activation and expansion which in turn provides immune surveillance of B cells. This chain is CD70 antigen, found in Homo sapiens (Human).